The primary structure comprises 205 residues: Inactive ribonuclease-like protein 9 (205 aa).

Residues 1–26 (MMRTLITTHPLPLLLLPQQLLQLVQF) form the signal peptide. 2 disulfides stabilise this stretch: cysteine 116-cysteine 168 and cysteine 123-cysteine 130. Residues asparagine 131 and asparagine 143 are each glycosylated (N-linked (GlcNAc...) asparagine).

This sequence belongs to the pancreatic ribonuclease family. In terms of tissue distribution, at the mRNA level, widely expressed. At protein level, restricted to epididymis. Expressed in spermatozoa (sperm head and neck), with higher levels on ejaculated and epididymal sperm than on testicular sperm (at protein level). Expressed in the epithelial cells of the epididymal tubule (at protein level). Not detected in muscle.

It is found in the secreted. Functionally, does not exhibit any ribonuclease activity. In Homo sapiens (Human), this protein is Inactive ribonuclease-like protein 9 (RNASE9).